Consider the following 284-residue polypeptide: Alpha-S1-casein (284 aa).

An N-terminal signal peptide occupies residues 1–15 (MKLLILTCLVAAALA). Disordered stretches follow at residues 21-44 (RRNAVSSQTQQENSSSEEQEIVKQ) and 78-111 (SSAEEQATASAQEDSSSSSSSSEESKDAIPSATE). Composition is skewed to low complexity over residues 24-36 (AVSSQTQQENSSS) and 78-99 (SSAEEQATASAQEDSSSSSSSS). Phosphoserine occurs at positions 79, 93, 94, 95, 96, 97, 98, and 99. Repeat copies occupy residues 138 to 143 (LLQQAS), 144 to 149 (LAQQAS), 150 to 155 (LAQQAS), 156 to 161 (LAQQAL), 162 to 167 (LAQQPS), 168 to 173 (LAQQAA), 174 to 179 (LAQQAS), 180 to 185 (LAQQAS), 186 to 191 (LAQQAS), and 192 to 197 (LAQKHH). The 10 X 6 AA tandem repeats stretch occupies residues 138–197 (LLQQASLAQQASLAQQASLAQQALLAQQPSLAQQAALAQQASLAQQASLAQQASLAQKHH).

Belongs to the alpha-casein family. In terms of tissue distribution, mammary gland specific. Secreted in milk.

The protein localises to the secreted. Important role in the capacity of milk to transport calcium phosphate. The chain is Alpha-S1-casein (Csn1s1) from Rattus norvegicus (Rat).